The sequence spans 465 residues: MNQDTICAIATAQGGAIGSIRVSGPEAISITSRIFQPAKAGKLLSEQKPYTLTFGRIYNGEEVIDEVLVSLFRAPHSYTGEDSTEITCHGSSYILQQVMQLLIKNGCRMAQPGEYTQRAFLNGKMDLSQAEAVADLIASSSAATHRLAMSQMRGGFSKELTDLRSKLLNFTSMIELELDFSEEDVEFADRSALRKLADEIEQVISRLVHSFNVGNAIKNGVPVAIIGETNAGKSTLLNVLLNEDKAIVSDIHGTTRDVIEDTINIGGITFRFIDTAGIRETNDTIESLGIERTFQKLDQAEIVLWMVDSSDASSQIKQLSEKIIPRCEEKQLIVVFNKADLIEEMQKEELSALLKNFPKEYTKSIFISAKERRQTDELQKMLINAAHLPTVTQNDIIVTNVRHYEALSKALDAIHRVQDGLDSHISGDFLSQDIRECIFFISDIAGEVTNDMVLQNIFQHFCIGK.

(6S)-5-formyl-5,6,7,8-tetrahydrofolate is bound by residues arginine 21, glutamate 85, and lysine 124. Residues 220 to 387 (GVPVAIIGET…LQKMLINAAH (168 aa)) form the TrmE-type G domain. Asparagine 230 provides a ligand contact to K(+). GTP-binding positions include 230–235 (NAGKST), 249–255 (SDIHGTT), 274–277 (DTAG), and 337–340 (NKAD). Residue serine 234 participates in Mg(2+) binding. Residues serine 249, isoleucine 251, and threonine 254 each coordinate K(+). Mg(2+) is bound at residue threonine 255. Lysine 465 contributes to the (6S)-5-formyl-5,6,7,8-tetrahydrofolate binding site.

This sequence belongs to the TRAFAC class TrmE-Era-EngA-EngB-Septin-like GTPase superfamily. TrmE GTPase family. Homodimer. Heterotetramer of two MnmE and two MnmG subunits. Requires K(+) as cofactor.

The protein localises to the cytoplasm. Exhibits a very high intrinsic GTPase hydrolysis rate. Involved in the addition of a carboxymethylaminomethyl (cmnm) group at the wobble position (U34) of certain tRNAs, forming tRNA-cmnm(5)s(2)U34. The protein is tRNA modification GTPase MnmE of Bacteroides thetaiotaomicron (strain ATCC 29148 / DSM 2079 / JCM 5827 / CCUG 10774 / NCTC 10582 / VPI-5482 / E50).